Here is a 399-residue protein sequence, read N- to C-terminus: MGLSWTVPLEWGKNHSTTNPLGFFPDHQLDPAFRANTRNPDWDHNPNKDHWTEANKVGVGAFGPGFTPPHGGLLGWSPQAQGMLKTLPADPPPASTNRQSGRQPTPITPPLRDTHPQAMQWNSTTFHQALQDPRVRGLYFPAGGSSSGTVNPVPTTASLISSIFSRIGDPAPNMEGITSGFLGPLLVLQAGFFLLTKILTIPQSLDSWWTSLNFLGGAPVCLGQNSQSPTSNHSPTSCPPICPGYRWMCLRRFIIFLFILLLCLIFLLVLLGYQGMLPVCPLIPGSSTTSTGPCRTCTTLAQGTSMFPSCCCSKPSDGNCTCIPIPSSWAFGKFLWEWASARFSWLSLLVPFVQWFAGLSPTVWLSVIWMMWYWGPSLYNILSPFIPLLPIFFCLWVYI.

An N-acetylmethionine modification is found at Met-1. The N-myristoyl glycine; by host moiety is linked to residue Gly-2. A pre-S1 region spans residues 2 to 118; it reads GLSWTVPLEW…PPLRDTHPQA (117 aa). Residues 2-173 are pre-S; sequence GLSWTVPLEW…FSRIGDPAPN (172 aa). Topologically, residues 2 to 180 are virion surface; in external conformation; sequence GLSWTVPLEW…APNMEGITSG (179 aa). Residues 2–252 lie on the Intravirion; in internal conformation side of the membrane; that stretch reads GLSWTVPLEW…PGYRWMCLRR (251 aa). A glycan (N-linked (GlcNAc...) asparagine) is linked at Ser-4. Residues 85 to 109 form a disordered region; that stretch reads KTLPADPPPASTNRQSGRQPTPITP. Residues 95–105 are compositionally biased toward polar residues; it reads STNRQSGRQPT. The interval 119 to 173 is pre-S2; the sequence is MQWNSTTFHQALQDPRVRGLYFPAGGSSSGTVNPVPTTASLISSIFSRIGDPAPN. The chain crosses the membrane as a helical span at residues 181-201; it reads FLGPLLVLQAGFFLLTKILTI. The Intravirion; in external conformation segment spans residues 202–252; it reads PQSLDSWWTSLNFLGGAPVCLGQNSQSPTSNHSPTSCPPICPGYRWMCLRR. The chain crosses the membrane as a helical span at residues 253–273; the sequence is FIIFLFILLLCLIFLLVLLGY. Over 274–347 the chain is Virion surface; the sequence is QGMLPVCPLI…WASARFSWLS (74 aa). Asn-319 is a glycosylation site (N-linked (GlcNAc...) asparagine; by host). Residues 348–368 traverse the membrane as a helical segment; that stretch reads LLVPFVQWFAGLSPTVWLSVI. Topologically, residues 369–374 are intravirion; the sequence is WMMWYW. The chain crosses the membrane as a helical span at residues 375-397; that stretch reads GPSLYNILSPFIPLLPIFFCLWV. The Virion surface portion of the chain corresponds to 398–399; that stretch reads YI.

It belongs to the orthohepadnavirus major surface antigen family. In its internal form (Li-HBsAg), interacts with the capsid protein and with the isoform S. Interacts with host chaperone CANX. In terms of assembly, associates with host chaperone CANX through its pre-S2 N glycan; this association may be essential for isoform M proper secretion. As to quaternary structure, interacts with isoform L. Interacts with the antigens of satellite virus HDV (HDVAgs); this interaction is required for encapsidation of HDV genomic RNA. In terms of processing, isoform M is N-terminally acetylated by host at a ratio of 90%, and N-glycosylated by host at the pre-S2 region. Myristoylated.

It localises to the virion membrane. The large envelope protein exists in two topological conformations, one which is termed 'external' or Le-HBsAg and the other 'internal' or Li-HBsAg. In its external conformation the protein attaches the virus to cell receptors and thereby initiating infection. This interaction determines the species specificity and liver tropism. This attachment induces virion internalization predominantly through caveolin-mediated endocytosis. The large envelope protein also assures fusion between virion membrane and endosomal membrane. In its internal conformation the protein plays a role in virion morphogenesis and mediates the contact with the nucleocapsid like a matrix protein. Its function is as follows. The middle envelope protein plays an important role in the budding of the virion. It is involved in the induction of budding in a nucleocapsid independent way. In this process the majority of envelope proteins bud to form subviral lipoprotein particles of 22 nm of diameter that do not contain a nucleocapsid. This is Large envelope protein from Hepatitis B virus genotype E (isolate Cote d'Ivoire/ABI-129/2003) (HBV-E).